We begin with the raw amino-acid sequence, 207 residues long: Uracil phosphoribosyltransferase (207 aa).

5-phospho-alpha-D-ribose 1-diphosphate contacts are provided by residues R77, R102, and 129 to 137 (DPMLATGGS). Residues I192 and 197 to 199 (GDA) contribute to the uracil site. D198 is a 5-phospho-alpha-D-ribose 1-diphosphate binding site.

The protein belongs to the UPRTase family. Requires Mg(2+) as cofactor.

The catalysed reaction is UMP + diphosphate = 5-phospho-alpha-D-ribose 1-diphosphate + uracil. It participates in pyrimidine metabolism; UMP biosynthesis via salvage pathway; UMP from uracil: step 1/1. With respect to regulation, allosterically activated by GTP. Its function is as follows. Catalyzes the conversion of uracil and 5-phospho-alpha-D-ribose 1-diphosphate (PRPP) to UMP and diphosphate. In Mycobacterium marinum (strain ATCC BAA-535 / M), this protein is Uracil phosphoribosyltransferase.